Consider the following 267-residue polypeptide: Probable ribosomal RNA small subunit methyltransferase A (267 aa).

Residues Leu12, Gly37, Glu58, Asp83, and Asn100 each contribute to the S-adenosyl-L-methionine site.

The protein belongs to the class I-like SAM-binding methyltransferase superfamily. rRNA adenine N(6)-methyltransferase family. RsmA subfamily.

Its subcellular location is the cytoplasm. Specifically dimethylates two adjacent adenosines in the loop of a conserved hairpin near the 3'-end of 16S rRNA in the 30S particle. May play a critical role in biogenesis of 30S subunits. The chain is Probable ribosomal RNA small subunit methyltransferase A from Methanococcus maripaludis (strain DSM 14266 / JCM 13030 / NBRC 101832 / S2 / LL).